Consider the following 420-residue polypeptide: 3-phosphoshikimate 1-carboxyvinyltransferase (420 aa).

The tract at residues 1–24 (MTRTAKLTIIPPGRPLSGRAMPPG) is disordered. 3-phosphoshikimate-binding residues include lysine 26, serine 27, and arginine 31. Residue lysine 26 coordinates phosphoenolpyruvate. Phosphoenolpyruvate is bound by residues glycine 97 and arginine 125. 3-phosphoshikimate contacts are provided by serine 170, serine 171, glutamine 172, aspartate 297, asparagine 320, and lysine 324. Glutamine 172 is a phosphoenolpyruvate binding site. The Proton acceptor role is filled by aspartate 297. The phosphoenolpyruvate site is built by arginine 328, arginine 375, and lysine 400.

It belongs to the EPSP synthase family. In terms of assembly, monomer.

The protein resides in the cytoplasm. It carries out the reaction 3-phosphoshikimate + phosphoenolpyruvate = 5-O-(1-carboxyvinyl)-3-phosphoshikimate + phosphate. It participates in metabolic intermediate biosynthesis; chorismate biosynthesis; chorismate from D-erythrose 4-phosphate and phosphoenolpyruvate: step 6/7. Its function is as follows. Catalyzes the transfer of the enolpyruvyl moiety of phosphoenolpyruvate (PEP) to the 5-hydroxyl of shikimate-3-phosphate (S3P) to produce enolpyruvyl shikimate-3-phosphate and inorganic phosphate. The sequence is that of 3-phosphoshikimate 1-carboxyvinyltransferase from Rhizobium etli (strain CIAT 652).